The sequence spans 330 residues: Aspartate--ammonia ligase (330 aa).

Belongs to the class-II aminoacyl-tRNA synthetase family. AsnA subfamily.

Its subcellular location is the cytoplasm. The enzyme catalyses L-aspartate + NH4(+) + ATP = L-asparagine + AMP + diphosphate + H(+). It participates in amino-acid biosynthesis; L-asparagine biosynthesis; L-asparagine from L-aspartate (ammonia route): step 1/1. In Streptococcus pneumoniae serotype 19F (strain G54), this protein is Aspartate--ammonia ligase.